The following is a 250-amino-acid chain: NAD(P)H-hydrate epimerase (250 aa).

Positions 14–238 (AAALDVELMS…SIAEKYGIQK (225 aa)) constitute a YjeF N-terminal domain. 74–78 (NNGGD) contributes to the (6S)-NADPHX binding site. Residues Asn-75 and Asp-143 each coordinate K(+). (6S)-NADPHX-binding positions include 147 to 154 (GFSFHGTA), Tyr-159, and Asp-180. Ser-183 is a K(+) binding site.

Belongs to the NnrE/AIBP family. K(+) is required as a cofactor.

It catalyses the reaction (6R)-NADHX = (6S)-NADHX. The enzyme catalyses (6R)-NADPHX = (6S)-NADPHX. Functionally, catalyzes the epimerization of the S- and R-forms of NAD(P)HX, a damaged form of NAD(P)H that is a result of enzymatic or heat-dependent hydration. This is a prerequisite for the S-specific NAD(P)H-hydrate dehydratase to allow the repair of both epimers of NAD(P)HX. In Thalassiosira pseudonana (Marine diatom), this protein is NAD(P)H-hydrate epimerase.